The primary structure comprises 119 residues: Transcription and mRNA export factor SUS1 (119 aa).

This sequence belongs to the ENY2 family. Component of the nuclear pore complex (NPC)-associated TREX-2 complex (transcription and export complex 2), composed of at least SUS1, SAC3, THP1, SEM1, and CDC31. TREX-2 contains 2 SUS1 chains. The TREX-2 complex interacts with the nucleoporin NUP1. Component of the 1.8 MDa SAGA transcription coactivator-HAT complex. SAGA is built of 5 distinct domains with specialized functions. Within the SAGA complex, SUS1, SGF11, SGF73 and UBP8 form an additional subcomplex of SAGA called the DUB module (deubiquitination module). Interacts directly with THP1, SAC3, SGF11, and with the RNA polymerase II.

Its subcellular location is the nucleus. It is found in the nucleoplasm. It localises to the cytoplasm. The protein localises to the P-body. Its function is as follows. Involved in mRNA export coupled transcription activation by association with both the TREX-2 and the SAGA complexes. At the promoters, SAGA is required for recruitment of the basal transcription machinery. It influences RNA polymerase II transcriptional activity through different activities such as TBP interaction and promoter selectivity, interaction with transcription activators, and chromatin modification through histone acetylation and deubiquitination. Within the SAGA complex, participates in a subcomplex required for deubiquitination of H2B and for the maintenance of steady-state H3 methylation levels. The TREX-2 complex functions in docking export-competent ribonucleoprotein particles (mRNPs) to the nuclear entrance of the nuclear pore complex (nuclear basket). TREX-2 participates in mRNA export and accurate chromatin positioning in the nucleus by tethering genes to the nuclear periphery. May also be involved in cytoplasmic mRNA decay by interaction with components of P-bodies. The chain is Transcription and mRNA export factor SUS1 from Candida albicans (strain SC5314 / ATCC MYA-2876) (Yeast).